The primary structure comprises 359 residues: DNA polymerase IV (359 aa).

The UmuC domain maps to 6-186; it reads IIHVDMDAFY…LPIEAFWGVG (181 aa). Mg(2+) contacts are provided by Asp10 and Asp104. Residue Glu105 is part of the active site.

Belongs to the DNA polymerase type-Y family. Monomer. Requires Mg(2+) as cofactor.

The protein resides in the cytoplasm. The catalysed reaction is DNA(n) + a 2'-deoxyribonucleoside 5'-triphosphate = DNA(n+1) + diphosphate. Poorly processive, error-prone DNA polymerase involved in untargeted mutagenesis. Copies undamaged DNA at stalled replication forks, which arise in vivo from mismatched or misaligned primer ends. These misaligned primers can be extended by PolIV. Exhibits no 3'-5' exonuclease (proofreading) activity. May be involved in translesional synthesis, in conjunction with the beta clamp from PolIII. The chain is DNA polymerase IV from Akkermansia muciniphila (strain ATCC BAA-835 / DSM 22959 / JCM 33894 / BCRC 81048 / CCUG 64013 / CIP 107961 / Muc).